A 283-amino-acid polypeptide reads, in one-letter code: MLGVRALFGIGLLVTSRGGFVLTHTRACSSAASNIYSKHLTHRPTCTMANTGVKYLGQEEAQQIDEELFSDFSFSVDQLMELAGLSCATAVAKGYPVTSLLKSPARVLVICGPGNNGGDGLVCARHLKLFGYEPSVLYPKRPNKQLFQNLSIQCQKMEIPFLTEMPEADLIDEAYSLVVDAIFGFSFKGAVREPFGEILSQLKKITVPIASVDIPSGWDVEKGCPDGIQPDMLISLTAPKKSAALFKGRFHFLGGRFVPPVLEQKYQLNLPQYPGTECVFQLN.

The N-terminal 28 residues, 1-28 (MLGVRALFGIGLLVTSRGGFVLTHTRAC), are a transit peptide targeting the mitochondrion. The YjeF N-terminal domain maps to 61-270 (AQQIDEELFS…VLEQKYQLNL (210 aa)). Position 115 to 119 (115 to 119 (NNGGD)) interacts with (6S)-NADPHX. Residues Asn116 and Asp180 each contribute to the K(+) site. Residues 184 to 190 (GFSFKGA) and Asp213 contribute to the (6S)-NADPHX site. Ser216 contributes to the K(+) binding site.

It belongs to the NnrE/AIBP family. As to quaternary structure, homodimer. Interacts with apoa1a. Binds to high-density lipoprotein. The cofactor is K(+).

It localises to the mitochondrion. The protein localises to the secreted. The catalysed reaction is (6R)-NADHX = (6S)-NADHX. It carries out the reaction (6R)-NADPHX = (6S)-NADPHX. Its function is as follows. Catalyzes the epimerization of the S- and R-forms of NAD(P)HX, a damaged form of NAD(P)H that is a result of enzymatic or heat-dependent hydration. This is a prerequisite for the S-specific NAD(P)H-hydrate dehydratase to allow the repair of both epimers of NAD(P)HX. The sequence is that of NAD(P)H-hydrate epimerase from Danio rerio (Zebrafish).